We begin with the raw amino-acid sequence, 337 residues long: tRNA pseudouridine synthase D (337 aa).

The active-site Nucleophile is Asp77. One can recognise a TRUD domain in the interval 152-308 (GFPNYFTEQR…ARDFHWEFVE (157 aa)).

Belongs to the pseudouridine synthase TruD family.

It carries out the reaction uridine(13) in tRNA = pseudouridine(13) in tRNA. Its function is as follows. Responsible for synthesis of pseudouridine from uracil-13 in transfer RNAs. This is tRNA pseudouridine synthase D from Mannheimia succiniciproducens (strain KCTC 0769BP / MBEL55E).